The chain runs to 336 residues: DNA-directed RNA polymerase subunit alpha (336 aa).

The alpha N-terminal domain (alpha-NTD) stretch occupies residues 1–238 (MNDLDLNLVP…NLFLPFLQAE (238 aa)). The tract at residues 267–336 (AKKVTFQHIF…LQKRFGMRLQ (70 aa)) is alpha C-terminal domain (alpha-CTD).

This sequence belongs to the RNA polymerase alpha chain family. In terms of assembly, in plastids the minimal PEP RNA polymerase catalytic core is composed of four subunits: alpha, beta, beta', and beta''. When a (nuclear-encoded) sigma factor is associated with the core the holoenzyme is formed, which can initiate transcription.

It localises to the plastid. The protein resides in the chloroplast. It carries out the reaction RNA(n) + a ribonucleoside 5'-triphosphate = RNA(n+1) + diphosphate. DNA-dependent RNA polymerase catalyzes the transcription of DNA into RNA using the four ribonucleoside triphosphates as substrates. This Huperzia lucidula (Shining clubmoss) protein is DNA-directed RNA polymerase subunit alpha.